The sequence spans 327 residues: Phosphate acyltransferase (327 aa).

Belongs to the PlsX family. In terms of assembly, homodimer. Probably interacts with PlsY.

It localises to the cytoplasm. The catalysed reaction is a fatty acyl-[ACP] + phosphate = an acyl phosphate + holo-[ACP]. The protein operates within lipid metabolism; phospholipid metabolism. In terms of biological role, catalyzes the reversible formation of acyl-phosphate (acyl-PO(4)) from acyl-[acyl-carrier-protein] (acyl-ACP). This enzyme utilizes acyl-ACP as fatty acyl donor, but not acyl-CoA. This chain is Phosphate acyltransferase, found in Thermotoga neapolitana (strain ATCC 49049 / DSM 4359 / NBRC 107923 / NS-E).